The sequence spans 135 residues: Large ribosomal subunit protein uL16c (135 aa).

It belongs to the universal ribosomal protein uL16 family. As to quaternary structure, part of the 50S ribosomal subunit.

The protein resides in the plastid. Its subcellular location is the chloroplast. In Ceratophyllum demersum (Rigid hornwort), this protein is Large ribosomal subunit protein uL16c.